We begin with the raw amino-acid sequence, 343 residues long: Inositol 2-dehydrogenase 1 (343 aa).

This sequence belongs to the Gfo/Idh/MocA family. Homotetramer.

It carries out the reaction myo-inositol + NAD(+) = scyllo-inosose + NADH + H(+). Functionally, involved in the oxidation of myo-inositol (MI) to 2-keto-myo-inositol (2KMI or 2-inosose). The sequence is that of Inositol 2-dehydrogenase 1 from Mycolicibacterium vanbaalenii (strain DSM 7251 / JCM 13017 / BCRC 16820 / KCTC 9966 / NRRL B-24157 / PYR-1) (Mycobacterium vanbaalenii).